Here is a 452-residue protein sequence, read N- to C-terminus: General transcription and DNA repair factor IIH subunit TFB2 (452 aa).

Belongs to the TFB2 family. As to quaternary structure, component of the 7-subunit TFIIH core complex composed of XPB, XPD, TFB1/GTF2H1, GTF2H2/P44, TFB4/GTF2H3, TFB2/GTF2H4 and TFB5/GTF2H5, which is active in NER. The core complex associates with the 3-subunit CDK-activating kinase (CAK) module composed of CYCH1/cyclin H1, CDKD and MAT1/At4g30820 to form the 10-subunit holoenzyme (holo-TFIIH) active in transcription.

Its subcellular location is the nucleus. Component of the general transcription and DNA repair factor IIH (TFIIH) core complex, which is involved in general and transcription-coupled nucleotide excision repair (NER) of damaged DNA and, when complexed to CAK, in RNA transcription by RNA polymerase II. In NER, TFIIH acts by opening DNA around the lesion to allow the excision of the damaged oligonucleotide and its replacement by a new DNA fragment. In transcription, TFIIH has an essential role in transcription initiation. When the pre-initiation complex (PIC) has been established, TFIIH is required for promoter opening and promoter escape. Phosphorylation of the C-terminal tail (CTD) of the largest subunit of RNA polymerase II by the kinase module CAK controls the initiation of transcription. The sequence is that of General transcription and DNA repair factor IIH subunit TFB2 from Arabidopsis thaliana (Mouse-ear cress).